The primary structure comprises 197 residues: MPMALDTSFSRAPAIAPQPKGIIDPATGLPVGATDPTFLSINDELADRGFLLTTADDLITWARTGSLMWMTFGLACCAVEMMQMSMPRYDAERFGFAPRASPRQSDVMIVAGTLTNKMAPALRKVYDQMPEPRYVISMGSCANGGGYYHYSYSVVRGCDRVVPVDIYVPGCPPSAEALLYGVLLLQKKIRRTGTIER.

Positions 76, 77, 141, and 171 each coordinate [4Fe-4S] cluster.

Belongs to the complex I 20 kDa subunit family. In terms of assembly, NDH-1 is composed of 14 different subunits. Subunits NuoB, C, D, E, F, and G constitute the peripheral sector of the complex. It depends on [4Fe-4S] cluster as a cofactor.

The protein resides in the cell inner membrane. The enzyme catalyses a quinone + NADH + 5 H(+)(in) = a quinol + NAD(+) + 4 H(+)(out). Its function is as follows. NDH-1 shuttles electrons from NADH, via FMN and iron-sulfur (Fe-S) centers, to quinones in the respiratory chain. The immediate electron acceptor for the enzyme in this species is believed to be ubiquinone. Couples the redox reaction to proton translocation (for every two electrons transferred, four hydrogen ions are translocated across the cytoplasmic membrane), and thus conserves the redox energy in a proton gradient. The protein is NADH-quinone oxidoreductase subunit B of Methylobacterium nodulans (strain LMG 21967 / CNCM I-2342 / ORS 2060).